We begin with the raw amino-acid sequence, 593 residues long: Alanine--tRNA ligase (593 aa).

Residues histidine 456, histidine 460, cysteine 558, and histidine 562 each contribute to the Zn(2+) site.

This sequence belongs to the class-II aminoacyl-tRNA synthetase family. Requires Zn(2+) as cofactor.

It localises to the cytoplasm. The catalysed reaction is tRNA(Ala) + L-alanine + ATP = L-alanyl-tRNA(Ala) + AMP + diphosphate. Its function is as follows. Catalyzes the attachment of alanine to tRNA(Ala) in a two-step reaction: alanine is first activated by ATP to form Ala-AMP and then transferred to the acceptor end of tRNA(Ala). Also edits incorrectly charged Ser-tRNA(Ala) and Gly-tRNA(Ala) via its editing domain. This chain is Alanine--tRNA ligase (alaS), found in Borrelia hermsii (strain HS1 / DAH).